A 259-amino-acid polypeptide reads, in one-letter code: UPF0246 protein NMB0895 (259 aa).

Belongs to the UPF0246 family.

This is UPF0246 protein NMB0895 from Neisseria meningitidis serogroup B (strain ATCC BAA-335 / MC58).